The following is a 522-amino-acid chain: Golgin subfamily A member 6-like protein 10 (522 aa).

Residues M1–P11 show a composition bias toward pro residues. A disordered region spans residues M1–G77. The span at N51–G62 shows a compositional bias: polar residues. A coiled-coil region spans residues S157–G328. Positions K439 to G452 are enriched in basic and acidic residues. A disordered region spans residues K439–E503. Composition is skewed to low complexity over residues A456–A471 and G489–E503.

Belongs to the GOLGA6 family.

This Homo sapiens (Human) protein is Golgin subfamily A member 6-like protein 10.